Consider the following 189-residue polypeptide: UPF0301 protein HRM2_24640 (189 aa).

It belongs to the UPF0301 (AlgH) family.

In Desulforapulum autotrophicum (strain ATCC 43914 / DSM 3382 / VKM B-1955 / HRM2) (Desulfobacterium autotrophicum), this protein is UPF0301 protein HRM2_24640.